The sequence spans 504 residues: Arabinose import ATP-binding protein AraG (504 aa).

ABC transporter domains lie at 8 to 243 (LSFR…MVGR) and 256 to 499 (YGEE…MPKV). An ATP-binding site is contributed by 40 to 47 (GENGAGKS).

The protein belongs to the ABC transporter superfamily. Arabinose importer (TC 3.A.1.2.2) family. In terms of assembly, the complex is composed of two ATP-binding proteins (AraG), two transmembrane proteins (AraH) and a solute-binding protein (AraF).

It localises to the cell inner membrane. The enzyme catalyses L-arabinose(out) + ATP + H2O = L-arabinose(in) + ADP + phosphate + H(+). Part of the ABC transporter complex AraFGH involved in arabinose import. Responsible for energy coupling to the transport system. The chain is Arabinose import ATP-binding protein AraG from Escherichia coli O157:H7.